Consider the following 840-residue polypeptide: OTU domain-containing protein 7B (840 aa).

Positions 49–88 (AGNLSPPFSGGSTCPKTPEKGGSDREPTRPSRPILQRQDD) are disordered. Residues 65–77 (TPEKGGSDREPTR) show a composition bias toward basic and acidic residues. Position 100 is a phosphoserine (Ser100). The interval 152-401 (ERDLIEQSML…AVDPGKGWEW (250 aa)) is TRAF-binding. A catalytic region spans residues 167–440 (AGRLNWWVSM…VKWIPLSSDS (274 aa)). The 183-residue stretch at 183 to 365 (LLPLATTGDG…QAHFSALVSM (183 aa)) folds into the OTU domain. A regulatory loop region spans residues 187-193 (ATTGDGN). Residue Asp191 is part of the active site. Cys194 (nucleophile) is an active-site residue. His358 (proton acceptor) is an active-site residue. Positions 440 to 452 (SQAPLAQPESPTA) are enriched in polar residues. 2 disordered regions span residues 440 to 592 (SQAP…YSQE) and 653 to 710 (IMNG…VHCQ). 2 stretches are compositionally biased toward basic and acidic residues: residues 456–471 (DEPR…DKES) and 488–500 (SKRD…KRAD). A phosphoserine mark is found at Ser464, Ser467, and Ser471. A Nuclear localization signal motif is present at residues 483-498 (RRKEKSKRDREKDKKR). A compositionally biased stretch (gly residues) spans 531–541 (KPGGLGSGSGI). Position 730 is a phosphothreonine (Thr730). The segment at 793–828 (PPTQTKCKQPNCSFYGHPETNNLCSCCYREELRRRE) adopts an A20-type zinc-finger fold. The Zn(2+) site is built by Cys799, Cys804, Cys816, and Cys819.

Belongs to the peptidase C64 family. As to quaternary structure, interacts with TRAF6. Interacts with PARK7, leading to inhibit deubiquitinase activity. Interacts with EGFR, ITCH and NEDD4. Interacts with TRAF3. Interacts with ZAP70 in activated T cells, but not in resting T cells. In terms of processing, phosphorylated by EGFR.

The protein localises to the cytoplasm. The protein resides in the nucleus. The catalysed reaction is Thiol-dependent hydrolysis of ester, thioester, amide, peptide and isopeptide bonds formed by the C-terminal Gly of ubiquitin (a 76-residue protein attached to proteins as an intracellular targeting signal).. With respect to regulation, deubiquitinase activity is inhibited following interaction with PARK7. Negative regulator of the non-canonical NF-kappa-B pathway that acts by mediating deubiquitination of TRAF3, an inhibitor of the NF-kappa-B pathway, thereby acting as a negative regulator of B-cell responses. In response to non-canonical NF-kappa-B stimuli, deubiquitinates 'Lys-48'-linked polyubiquitin chains of TRAF3, preventing TRAF3 proteolysis and over-activation of non-canonical NF-kappa-B. Negatively regulates mucosal immunity against infections. Deubiquitinates ZAP70, and thereby regulates T cell receptor (TCR) signaling that leads to the activation of NF-kappa-B. Plays a role in T cell homeostasis and is required for normal T cell responses, including production of IFNG and IL2. Mediates deubiquitination of EGFR. Has deubiquitinating activity toward 'Lys-11', 'Lys-48' and 'Lys-63'-linked polyubiquitin chains. Has a much higher catalytic rate with 'Lys-11'-linked polyubiquitin chains (in vitro); however the physiological significance of these data are unsure. Hydrolyzes both linear and branched forms of polyubiquitin. Acts as a regulator of mTORC1 and mTORC2 assembly by mediating 'Lys-63'-linked deubiquitination of MLST8, thereby promoting assembly of the mTORC2 complex, while inibiting formation of the mTORC1 complex. The protein is OTU domain-containing protein 7B (Otud7b) of Mus musculus (Mouse).